We begin with the raw amino-acid sequence, 286 residues long: ATP synthase gamma chain (286 aa).

It belongs to the ATPase gamma chain family. As to quaternary structure, F-type ATPases have 2 components, CF(1) - the catalytic core - and CF(0) - the membrane proton channel. CF(1) has five subunits: alpha(3), beta(3), gamma(1), delta(1), epsilon(1). CF(0) has three main subunits: a, b and c.

It localises to the cell membrane. Produces ATP from ADP in the presence of a proton gradient across the membrane. The gamma chain is believed to be important in regulating ATPase activity and the flow of protons through the CF(0) complex. This is ATP synthase gamma chain from Bacillus mycoides (strain KBAB4) (Bacillus weihenstephanensis).